We begin with the raw amino-acid sequence, 1151 residues long: ATP-dependent helicase/deoxyribonuclease subunit B (1151 aa).

One can recognise a UvrD-like helicase ATP-binding domain in the interval 1–273; the sequence is MALRLVLGRA…LALAAGVRVE (273 aa). An ATP-binding site is contributed by 8-15; sequence GRAGSGKT. One can recognise a UvrD-like helicase C-terminal domain in the interval 282 to 578; it reads PPRFREAPAL…KLRLIPPALD (297 aa). Residues Cys788, Cys1107, Cys1110, and Cys1116 each coordinate [4Fe-4S] cluster.

The protein belongs to the helicase family. AddB/RexB type 1 subfamily. In terms of assembly, heterodimer of AddA and AddB. It depends on Mg(2+) as a cofactor. The cofactor is [4Fe-4S] cluster.

Its function is as follows. The heterodimer acts as both an ATP-dependent DNA helicase and an ATP-dependent, dual-direction single-stranded exonuclease. Recognizes the chi site generating a DNA molecule suitable for the initiation of homologous recombination. The AddB subunit has 5' -&gt; 3' nuclease activity but not helicase activity. This chain is ATP-dependent helicase/deoxyribonuclease subunit B, found in Moorella thermoacetica (strain ATCC 39073 / JCM 9320).